A 311-amino-acid chain; its full sequence is Hevamine-A (311 aa).

The first 26 residues, 1–26, serve as a signal peptide directing secretion; sequence MAKRTQAILLLLLAISLIMSSSHVDG. Residues 27 to 302 form the GH18 domain; the sequence is GGIAIYWGQN…SSILDSVLFL (276 aa). Intrachain disulfides connect Cys-46-Cys-93 and Cys-76-Cys-83. Glu-153 (proton donor) is an active-site residue. A disulfide bridge connects residues Cys-185 and Cys-214. The propeptide at 300 to 311 is removed in mature form; it reads LFLHSEECMTVL.

This sequence belongs to the glycosyl hydrolase 18 family. Chitinase class II subfamily.

It is found in the vacuole. It catalyses the reaction Random endo-hydrolysis of N-acetyl-beta-D-glucosaminide (1-&gt;4)-beta-linkages in chitin and chitodextrins.. The enzyme catalyses Hydrolysis of (1-&gt;4)-beta-linkages between N-acetylmuramic acid and N-acetyl-D-glucosamine residues in a peptidoglycan and between N-acetyl-D-glucosamine residues in chitodextrins.. Its function is as follows. Bifunctional enzyme with lysozyme / chitinase activity. May have a role in plugging the latex vessel and cessation of latex flow. This Hevea brasiliensis (Para rubber tree) protein is Hevamine-A.